The sequence spans 670 residues: MWHEARKHERKLRGMMVDYKKRAERRREYYEKIKKDPAQFLQVHGRACKVHLDSAVALAAESPVNMMPWQGDTNNMIDRFDVRAHLDHIPDYTPPLLTTISPEQESDERKCNYERYRGLVQNDFAGISEEQCLYQIYIDELYGGLQRPSEDEKKKLAEKKASIGYTYEDSTVAEVEKVTEKPEEEESPAEEESNSDEDEVIPDIDVEVDVDELNQEQVADLNKQATTYGMADGDFVRMLRKDKEEAEAIKHAKALEEEKAMYSGRRSRRQRREFREKRLRGRKISPPSYARRDSPTYDPYKRSPSESSSESRSRSRSPTPGREEKITFITSFGGSDEEAAAAAAAAAASGAATGKPPAPPQPGGPAPGRNASARRRSSTSSSSSSASRTSSSRSRSSSSSRSRRGGGYYRSGRHARSRSRSWSRSRSRSRRYSRSRSRGRRHSGGGSRDGHRYSRSPARRGGYGPRRRSRSRSRSGDRYRRGGRGPRHHSSSRSSWSLSPSRSRSLTRSRSPSLSRSRSLSRSRSQSHSPSPPREKLSRPAASPAVGEKLKKTEPAAGKETGAAKPKLTPQEKLKLRMQKALNRQFKADKKAAQEKMIQQEHERQEREDELRAMARKIRMKERERREKEREEWERQYSRQSRSPSPRYSREYSSSRRRSRSRSRSPHYRH.

Position 101 is a phosphoserine (Ser-101). Disordered regions lie at residues 171–232 and 258–670; these read TVAE…GMAD and EKAM…HYRH. Acidic residues predominate over residues 182 to 214; sequence PEEEESPAEEESNSDEDEVIPDIDVEVDVDELN. A compositionally biased stretch (basic residues) spans 265–283; that stretch reads RRSRRQRREFREKRLRGRK. Residues Ser-285 and Ser-294 each carry the phosphoserine modification. Residues 290 to 313 show a composition bias toward basic and acidic residues; that stretch reads ARRDSPTYDPYKRSPSESSSESRS. Thr-327 is subject to Phosphothreonine. Residues Ser-331 and Ser-335 each carry the phosphoserine modification. Low complexity predominate over residues 340-355; that stretch reads AAAAAAAAASGAATGK. Residues 356-365 are compositionally biased toward pro residues; it reads PPAPPQPGGP. Residues 378–400 are compositionally biased toward low complexity; that stretch reads STSSSSSSASRTSSSRSRSSSSS. Composition is skewed to basic residues over residues 411-443 and 481-491; these read SGRH…RRHS and RGGRGPRHHSS. Over residues 492 to 529 the composition is skewed to low complexity; sequence SRSSWSLSPSRSRSLTRSRSPSLSRSRSLSRSRSQSHS. Ser-543 is modified (phosphoserine). The residue at position 569 (Thr-569) is a Phosphothreonine. Residues 581 to 643 are a coiled coil; the sequence is ALNRQFKADK…ERQYSRQSRS (63 aa). Composition is skewed to basic and acidic residues over residues 586–613 and 621–637; these read FKAD…ELRA and KERE…ERQY. Residues 638 to 647 show a composition bias toward low complexity; the sequence is SRQSRSPSPR. Positions 655–670 are enriched in basic residues; the sequence is SRRRSRSRSRSPHYRH.

The protein belongs to the splicing factor SR family. Probably interacts with CLK4. Phosphorylated in vitro by CLK4.

Its subcellular location is the nucleus. Probably functions as an alternative splicing regulator. May regulate the mRNA splicing of genes such as CLK1. May act by regulating members of the CLK kinase family. The chain is CLK4-associating serine/arginine rich protein (CLASRP) from Bos taurus (Bovine).